Reading from the N-terminus, the 396-residue chain is Elongation factor Tu 1 (396 aa).

Residues Lys-10–Glu-206 form the tr-type G domain. The tract at residues Gly-19–Thr-26 is G1. GTP is bound at residue Gly-19–Thr-26. Thr-26 is a Mg(2+) binding site. The interval Gly-60–Asn-64 is G2. The G3 stretch occupies residues Asp-81–Gly-84. GTP contacts are provided by residues Asp-81–His-85 and Asn-136–Asp-139. The interval Asn-136–Asp-139 is G4. The segment at Ser-174–Leu-176 is G5.

Belongs to the TRAFAC class translation factor GTPase superfamily. Classic translation factor GTPase family. EF-Tu/EF-1A subfamily. Monomer.

It localises to the cytoplasm. It carries out the reaction GTP + H2O = GDP + phosphate + H(+). In terms of biological role, GTP hydrolase that promotes the GTP-dependent binding of aminoacyl-tRNA to the A-site of ribosomes during protein biosynthesis. The protein is Elongation factor Tu 1 of Hyphomonas neptunium (strain ATCC 15444).